We begin with the raw amino-acid sequence, 107 residues long: Homeobox protein HD-3 (107 aa).

Residues 6-65 (SKAPRTRMTAGQTRVLMSFFKDNPFPSTTAREKLSKVLGVGPRTVQIWFQNQRQKARGQA) constitute a DNA-binding region (homeobox).

The protein resides in the nucleus. In Encephalitozoon cuniculi (strain GB-M1) (Microsporidian parasite), this protein is Homeobox protein HD-3 (HD-3).